A 484-amino-acid chain; its full sequence is Aspartyl/glutamyl-tRNA(Asn/Gln) amidotransferase subunit B (484 aa).

This sequence belongs to the GatB/GatE family. GatB subfamily. In terms of assembly, heterotrimer of A, B and C subunits.

The enzyme catalyses L-glutamyl-tRNA(Gln) + L-glutamine + ATP + H2O = L-glutaminyl-tRNA(Gln) + L-glutamate + ADP + phosphate + H(+). The catalysed reaction is L-aspartyl-tRNA(Asn) + L-glutamine + ATP + H2O = L-asparaginyl-tRNA(Asn) + L-glutamate + ADP + phosphate + 2 H(+). Allows the formation of correctly charged Asn-tRNA(Asn) or Gln-tRNA(Gln) through the transamidation of misacylated Asp-tRNA(Asn) or Glu-tRNA(Gln) in organisms which lack either or both of asparaginyl-tRNA or glutaminyl-tRNA synthetases. The reaction takes place in the presence of glutamine and ATP through an activated phospho-Asp-tRNA(Asn) or phospho-Glu-tRNA(Gln). This is Aspartyl/glutamyl-tRNA(Asn/Gln) amidotransferase subunit B from Dechloromonas aromatica (strain RCB).